A 131-amino-acid polypeptide reads, in one-letter code: D-ribose pyranase (131 aa).

The Proton donor role is filled by histidine 20. Substrate contacts are provided by residues aspartate 28, histidine 98, and 120-122; that span reads YAN.

Belongs to the RbsD / FucU family. RbsD subfamily. In terms of assembly, homodecamer.

It is found in the cytoplasm. It catalyses the reaction beta-D-ribopyranose = beta-D-ribofuranose. The protein operates within carbohydrate metabolism; D-ribose degradation; D-ribose 5-phosphate from beta-D-ribopyranose: step 1/2. Functionally, catalyzes the interconversion of beta-pyran and beta-furan forms of D-ribose. This is D-ribose pyranase from Bacillus cereus (strain G9842).